The following is a 450-amino-acid chain: 5-amino-6-(D-ribitylamino)uracil--L-tyrosine 4-hydroxyphenyl transferase (450 aa).

The segment at 1-24 is disordered; sequence MPDVPETVGTPDGSTEFEHRPTTD. A Radical SAM core domain is found at 82 to 350; it reads VTFVANLNNN…MIAVSRLFLD (269 aa). 3 residues coordinate [4Fe-4S] cluster: Cys96, Cys100, and Cys103. The segment at 430–450 is disordered; sequence PDADVLGPQLGPRADGTPLLD.

Belongs to the radical SAM superfamily. CofH family. As to quaternary structure, consists of two subunits, CofG and CofH. Requires [4Fe-4S] cluster as cofactor.

The catalysed reaction is 5-amino-6-(D-ribitylamino)uracil + L-tyrosine + S-adenosyl-L-methionine = 5-amino-5-(4-hydroxybenzyl)-6-(D-ribitylimino)-5,6-dihydrouracil + 2-iminoacetate + 5'-deoxyadenosine + L-methionine + H(+). It functions in the pathway cofactor biosynthesis; coenzyme F0 biosynthesis. Functionally, catalyzes the radical-mediated synthesis of 5-amino-5-(4-hydroxybenzyl)-6-(D-ribitylimino)-5,6-dihydrouracil from 5-amino-6-(D-ribitylamino)uracil and L-tyrosine. The polypeptide is 5-amino-6-(D-ribitylamino)uracil--L-tyrosine 4-hydroxyphenyl transferase (Haloarcula marismortui (strain ATCC 43049 / DSM 3752 / JCM 8966 / VKM B-1809) (Halobacterium marismortui)).